A 356-amino-acid polypeptide reads, in one-letter code: Dual-specificity RNA methyltransferase RlmN (356 aa).

Glu-95 serves as the catalytic Proton acceptor. The Radical SAM core domain occupies 101-332 (EDERGTLCIS…VTVIRDRRGE (232 aa)). Cys-108 and Cys-338 are joined by a disulfide. 3 residues coordinate [4Fe-4S] cluster: Cys-115, Cys-119, and Cys-122. Residues 165–166 (GE), Ser-197, 219–221 (SLH), and Asn-295 contribute to the S-adenosyl-L-methionine site. Cys-338 (S-methylcysteine intermediate) is an active-site residue.

This sequence belongs to the radical SAM superfamily. RlmN family. Requires [4Fe-4S] cluster as cofactor.

Its subcellular location is the cytoplasm. The catalysed reaction is adenosine(2503) in 23S rRNA + 2 reduced [2Fe-2S]-[ferredoxin] + 2 S-adenosyl-L-methionine = 2-methyladenosine(2503) in 23S rRNA + 5'-deoxyadenosine + L-methionine + 2 oxidized [2Fe-2S]-[ferredoxin] + S-adenosyl-L-homocysteine. It catalyses the reaction adenosine(37) in tRNA + 2 reduced [2Fe-2S]-[ferredoxin] + 2 S-adenosyl-L-methionine = 2-methyladenosine(37) in tRNA + 5'-deoxyadenosine + L-methionine + 2 oxidized [2Fe-2S]-[ferredoxin] + S-adenosyl-L-homocysteine. Functionally, specifically methylates position 2 of adenine 2503 in 23S rRNA and position 2 of adenine 37 in tRNAs. m2A2503 modification seems to play a crucial role in the proofreading step occurring at the peptidyl transferase center and thus would serve to optimize ribosomal fidelity. This chain is Dual-specificity RNA methyltransferase RlmN, found in Magnetococcus marinus (strain ATCC BAA-1437 / JCM 17883 / MC-1).